Here is a 2555-residue protein sequence, read N- to C-terminus: Ubiquitin carboxyl-terminal hydrolase 9Y (2555 aa).

The disordered stretch occupies residues 1-66 (MTAITHGSPV…APPQHEDEEP (66 aa)). Residues 13–45 (NDSQGQVLDGQSQHLFQQNQTSSPDSSNENSVA) show a composition bias toward polar residues. Ser589 is modified (phosphoserine). Position 591 is a phosphothreonine (Thr591). The segment at 972–997 (NMPSSPDSSSDSSTASPGNHRNHYND) is disordered. Over residues 974 to 984 (PSSPDSSSDSS) the composition is skewed to low complexity. The 400-residue stretch at 1559–1958 (VGLKNAGATC…NAYILFYEQM (400 aa)) folds into the USP domain. Catalysis depends on Cys1568, which acts as the Nucleophile. 4 residues coordinate Zn(2+): Cys1729, His1731, Cys1773, and Cys1776. The active-site Proton acceptor is His1881. Phosphoserine is present on Ser2444. Positions 2476 to 2485 (PEEEPDDQDA) are enriched in acidic residues. Residues 2476–2555 (PEEEPDDQDA…EVSSPQMKDQ (80 aa)) are disordered. Polar residues-rich tracts occupy residues 2504 to 2514 (PASQYQQNNHV) and 2528 to 2555 (NNPQ…MKDQ). Tyr2541 bears the Phosphotyrosine mark. Ser2548 carries the post-translational modification Phosphoserine.

Belongs to the peptidase C19 family. As to expression, widely expressed in embryonic and adult tissues.

It carries out the reaction Thiol-dependent hydrolysis of ester, thioester, amide, peptide and isopeptide bonds formed by the C-terminal Gly of ubiquitin (a 76-residue protein attached to proteins as an intracellular targeting signal).. Its pathway is protein modification; protein ubiquitination. In terms of biological role, deubiquitinase that mediates deubiquitination of target proteins. May stabilize target proteins that are important for male germ cell development. This is Ubiquitin carboxyl-terminal hydrolase 9Y from Homo sapiens (Human).